A 210-amino-acid polypeptide reads, in one-letter code: Uracil phosphoribosyltransferase (210 aa).

5-phospho-alpha-D-ribose 1-diphosphate is bound by residues Arg78, Arg103, and 130-138; that span reads DPMLATGGS. Uracil-binding positions include Ile195 and 200–202; that span reads GDA. 5-phospho-alpha-D-ribose 1-diphosphate is bound at residue Asp201.

It belongs to the UPRTase family. Mg(2+) serves as cofactor.

The catalysed reaction is UMP + diphosphate = 5-phospho-alpha-D-ribose 1-diphosphate + uracil. The protein operates within pyrimidine metabolism; UMP biosynthesis via salvage pathway; UMP from uracil: step 1/1. With respect to regulation, allosterically activated by GTP. Its function is as follows. Catalyzes the conversion of uracil and 5-phospho-alpha-D-ribose 1-diphosphate (PRPP) to UMP and diphosphate. This chain is Uracil phosphoribosyltransferase, found in Leifsonia xyli subsp. xyli (strain CTCB07).